The following is a 211-amino-acid chain: Thiamine-phosphate synthase (211 aa).

Residues 37–41 and Asn69 contribute to the 4-amino-2-methyl-5-(diphosphooxymethyl)pyrimidine site; that span reads QLRIK. Mg(2+) is bound by residues Asp70 and Asp89. Residue Ser108 participates in 4-amino-2-methyl-5-(diphosphooxymethyl)pyrimidine binding. 134–136 serves as a coordination point for 2-[(2R,5Z)-2-carboxy-4-methylthiazol-5(2H)-ylidene]ethyl phosphate; the sequence is TQT. Residue Lys137 coordinates 4-amino-2-methyl-5-(diphosphooxymethyl)pyrimidine. 2-[(2R,5Z)-2-carboxy-4-methylthiazol-5(2H)-ylidene]ethyl phosphate-binding positions include Gly166 and 186–187; that span reads VS.

It belongs to the thiamine-phosphate synthase family. It depends on Mg(2+) as a cofactor.

It carries out the reaction 2-[(2R,5Z)-2-carboxy-4-methylthiazol-5(2H)-ylidene]ethyl phosphate + 4-amino-2-methyl-5-(diphosphooxymethyl)pyrimidine + 2 H(+) = thiamine phosphate + CO2 + diphosphate. The catalysed reaction is 2-(2-carboxy-4-methylthiazol-5-yl)ethyl phosphate + 4-amino-2-methyl-5-(diphosphooxymethyl)pyrimidine + 2 H(+) = thiamine phosphate + CO2 + diphosphate. It catalyses the reaction 4-methyl-5-(2-phosphooxyethyl)-thiazole + 4-amino-2-methyl-5-(diphosphooxymethyl)pyrimidine + H(+) = thiamine phosphate + diphosphate. It functions in the pathway cofactor biosynthesis; thiamine diphosphate biosynthesis; thiamine phosphate from 4-amino-2-methyl-5-diphosphomethylpyrimidine and 4-methyl-5-(2-phosphoethyl)-thiazole: step 1/1. Functionally, condenses 4-methyl-5-(beta-hydroxyethyl)thiazole monophosphate (THZ-P) and 2-methyl-4-amino-5-hydroxymethyl pyrimidine pyrophosphate (HMP-PP) to form thiamine monophosphate (TMP). The sequence is that of Thiamine-phosphate synthase from Escherichia coli (strain SE11).